The sequence spans 231 residues: Response regulator Rre1 (231 aa).

The Response regulatory domain maps to 6–123; that stretch reads SLLLVDDEPG…ELEAIVRNLL (118 aa). Asp56 is modified (4-aspartylphosphate). One can recognise an HTH luxR-type domain in the interval 163 to 228; the sequence is PSPIKLDFTP…ELVRFALQHG (66 aa). Positions 187–206 form a DNA-binding region, H-T-H motif; sequence NKEIAAQLKTSVRNVEKYVS.

In terms of assembly, interacts with histidine kinase Hik2; may accept phosphate from Hik2.

In terms of biological role, member of at least 2 two-component regulatory systems Hik2/Rre1 and Hik34/Rre1. Responds to hyperosmotic stress, regulates expression of at least 24 genes including dnaK2 and hspA with Hik34 and sigB (sll0306), sll0528, slr1119, slr0852 and ssr3188 with Hik2. Responds to salt stress, regulates expression of at least 24 genes including adhA, dnaK2 and hspA with Hik34. Binds the adhA promoter. Phosphorylated by Hik2 in vitro. Phosphorylated protein has 10-fold higher affinity for DNA than unphosphorylated protein. This chain is Response regulator Rre1, found in Synechocystis sp. (strain ATCC 27184 / PCC 6803 / Kazusa).